We begin with the raw amino-acid sequence, 700 residues long: Calpain-2 catalytic subunit (700 aa).

The residue at position 2 (A2) is an N-acetylalanine. The propeptide at 2 to 19 (AGIAMKLAKDREAAEGLG) is anchors to the small subunit. In terms of domain architecture, Calpain catalytic spans 45-344 (LFQDPSFPAL…YSRLEICNLT (300 aa)). Ca(2+) is bound by residues I89, G91, and D96. Residue C105 is part of the active site. Ca(2+) is bound by residues E175, Q229, and K230. Catalysis depends on residues H262 and N286. Ca(2+)-binding residues include E292, D299, Q319, and E323. Residues 345–514 (PDTLTCDSYK…KKADYQTVDD (170 aa)) form a domain III region. A linker region spans residues 515–529 (EIEANIEEIEANEED). The interval 530-700 (IGDGFRRLFA…LISWLSFSVL (171 aa)) is domain IV. Positions 542, 545, 547, 552, 585, 587, 589, 591, 596, 615, 617, 619, 621, 626, 658, and 661 each coordinate Ca(2+). EF-hand domains follow at residues 572 to 605 (FSIE…TKIQ) and 602 to 637 (TKIQ…AGFK). Residues 667–700 (VRLEILFKIFKQLDPENTGTIQLDLISWLSFSVL) form the EF-hand 3 domain.

Belongs to the peptidase C2 family. As to quaternary structure, forms a heterodimer with a small (regulatory) subunit (CAPNS1). Interacts with CPEB3; this leads to cleavage of CPEB3. The cofactor is Ca(2+). Ubiquitous.

The protein resides in the cytoplasm. It is found in the cell membrane. The enzyme catalyses Broad endopeptidase specificity.. With respect to regulation, activated by 200-1000 micromolar concentrations of calcium and inhibited by calpastatin. Its function is as follows. Calcium-regulated non-lysosomal thiol-protease which catalyze limited proteolysis of substrates involved in cytoskeletal remodeling and signal transduction. Proteolytically cleaves MYOC at 'Arg-226'. Proteolytically cleaves CPEB3 following neuronal stimulation which abolishes CPEB3 translational repressor activity, leading to translation of CPEB3 target mRNAs. This Rattus norvegicus (Rat) protein is Calpain-2 catalytic subunit (Capn2).